A 116-amino-acid chain; its full sequence is MLYISGARLVADKQVRIALTKMYGIGPKKAIQVCYRLGISGNIKIKELTKYQIDQMEQMIGQDHVVHWELKRGERADIERFISISCYRGIRHQDGLPLRGQRTHTNARTCRKQIRK.

The protein belongs to the universal ribosomal protein uS13 family. In terms of assembly, part of the small ribosomal subunit.

Its subcellular location is the mitochondrion. Its function is as follows. Located at the top of the head of the small subunit, it contacts several helices of the 18S rRNA. The sequence is that of Small ribosomal subunit protein uS13m (RPS13) from Daucus carota (Wild carrot).